We begin with the raw amino-acid sequence, 227 residues long: Peroxiredoxin 1 (227 aa).

The region spanning 6 to 161 is the Thioredoxin domain; that stretch reads PLIGEKFPEM…ILRLIKSLQM (156 aa). The Cysteine sulfenic acid (-SOH) intermediate role is filled by C48. R124 is a substrate binding site.

It belongs to the peroxiredoxin family. Prx6 subfamily. Homodecamer. Pentamer of dimers that assemble into a ring structure.

The protein localises to the cytoplasm. The catalysed reaction is a hydroperoxide + [thioredoxin]-dithiol = an alcohol + [thioredoxin]-disulfide + H2O. Thiol-specific peroxidase that catalyzes the reduction of hydrogen peroxide and organic hydroperoxides to water and alcohols, respectively. Plays a role in cell protection against oxidative stress by detoxifying peroxides. In Picrophilus torridus (strain ATCC 700027 / DSM 9790 / JCM 10055 / NBRC 100828 / KAW 2/3), this protein is Peroxiredoxin 1.